The following is a 501-amino-acid chain: Aspartate--tRNA ligase, cytoplasmic (501 aa).

Thr-52 is subject to Phosphothreonine. N6-acetyllysine is present on Lys-74. Glu-229 provides a ligand contact to L-aspartate. Position 249 is a phosphoserine (Ser-249). Positions 251–254 (QLYK) are aspartate. Arg-273 contributes to the L-aspartate binding site. Residues 273 to 275 (RAE) and 281 to 283 (RHL) contribute to the ATP site. N6-acetyllysine is present on Lys-374. The binding site for the 3'-end of tRNA stretch occupies residues 411-415 (KQSNS). Residue Glu-424 participates in ATP binding. 2 residues coordinate L-aspartate: Ser-427 and Arg-431. An ATP-binding site is contributed by 472–475 (GLER). Thr-500 is subject to Phosphothreonine; by PKA.

It belongs to the class-II aminoacyl-tRNA synthetase family. Type 2 subfamily. In terms of assembly, homodimer. Part of a multisubunit complex that groups tRNA ligases for Arg (RARS1), Asp (DARS1), Gln (QARS1), Ile (IARS1), Leu (LARS1), Lys (KARS1), Met (MARS1) the bifunctional ligase for Glu and Pro (EPRS1) and the auxiliary subunits AIMP1/p43, AIMP2/p38 and EEF1E1/p18. As to expression, expression in the developing and adult brain shows similar patterns. Highly expressed in the ventricular and subventricular zones, including hippocampal subfields, the midlateral temporal cortex and the frontal polar cortex. The cerebellum, cerebral cortex, hippocampus, and lateral ventricle show preferential neuronal expression. Expression in the peripheral neurons is evident in the colon.

It is found in the cytoplasm. Its subcellular location is the cytosol. The catalysed reaction is tRNA(Asp) + L-aspartate + ATP = L-aspartyl-tRNA(Asp) + AMP + diphosphate. Catalyzes the specific attachment of an amino acid to its cognate tRNA in a 2 step reaction: the amino acid (AA) is first activated by ATP to form AA-AMP and then transferred to the acceptor end of the tRNA. This is Aspartate--tRNA ligase, cytoplasmic from Homo sapiens (Human).